The following is an 871-amino-acid chain: DNA mismatch repair protein MutS (871 aa).

625-632 (GPNMAGKS) contacts ATP.

It belongs to the DNA mismatch repair MutS family.

In terms of biological role, this protein is involved in the repair of mismatches in DNA. It is possible that it carries out the mismatch recognition step. This protein has a weak ATPase activity. This chain is DNA mismatch repair protein MutS, found in Chlorobium limicola (strain DSM 245 / NBRC 103803 / 6330).